A 316-amino-acid polypeptide reads, in one-letter code: Beta-ketoacyl-[acyl-carrier-protein] synthase III 1 (316 aa).

Residues cysteine 112 and histidine 243 contribute to the active site. An ACP-binding region spans residues glutamine 244 to arginine 248. Residue asparagine 273 is part of the active site.

The protein belongs to the thiolase-like superfamily. FabH family. In terms of assembly, homodimer.

The protein resides in the cytoplasm. The catalysed reaction is malonyl-[ACP] + acetyl-CoA + H(+) = 3-oxobutanoyl-[ACP] + CO2 + CoA. It functions in the pathway lipid metabolism; fatty acid biosynthesis. Functionally, catalyzes the condensation reaction of fatty acid synthesis by the addition to an acyl acceptor of two carbons from malonyl-ACP. Catalyzes the first condensation reaction which initiates fatty acid synthesis and may therefore play a role in governing the total rate of fatty acid production. Possesses both acetoacetyl-ACP synthase and acetyl transacylase activities. Its substrate specificity determines the biosynthesis of branched-chain and/or straight-chain of fatty acids. The sequence is that of Beta-ketoacyl-[acyl-carrier-protein] synthase III 1 from Vibrio vulnificus (strain YJ016).